A 165-amino-acid polypeptide reads, in one-letter code: Transcriptional repressor NrdR (165 aa).

A zinc finger spans residues 3-34; that stretch reads CPFCSANDTKVIDSRLVSDGHQVRRRRECLAC. An ATP-cone domain is found at 49 to 139; that stretch reads PRIIKRDGSR…VYLSFEDISE (91 aa).

This sequence belongs to the NrdR family. Requires Zn(2+) as cofactor.

Its function is as follows. Negatively regulates transcription of bacterial ribonucleotide reductase nrd genes and operons by binding to NrdR-boxes. This Colwellia psychrerythraea (strain 34H / ATCC BAA-681) (Vibrio psychroerythus) protein is Transcriptional repressor NrdR.